We begin with the raw amino-acid sequence, 933 residues long: C-1-tetrahydrofolate synthase, cytoplasmic (933 aa).

The methylenetetrahydrofolate dehydrogenase and cyclohydrolase stretch occupies residues 1–303 (MWEPQGSLDP…DRLLAPTWPL (303 aa)). Residues 51 to 55 (YIRMK) and 98 to 100 (VQM) each bind substrate. Residues 170–172 (GRS) and Ser195 contribute to the NADP(+) site. 270–274 (PGGVG) serves as a coordination point for substrate. The formyltetrahydrofolate synthetase stretch occupies residues 304–933 (RPLRITPLSP…TKTGEIEGLF (630 aa)). Residue 378–385 (TPLGEGKS) participates in ATP binding.

This sequence in the N-terminal section; belongs to the tetrahydrofolate dehydrogenase/cyclohydrolase family. In the C-terminal section; belongs to the formate--tetrahydrofolate ligase family. In terms of assembly, homodimer.

The protein localises to the cytoplasm. It catalyses the reaction (6R)-5,10-methylene-5,6,7,8-tetrahydrofolate + NADP(+) = (6R)-5,10-methenyltetrahydrofolate + NADPH. The catalysed reaction is (6R)-5,10-methenyltetrahydrofolate + H2O = (6R)-10-formyltetrahydrofolate + H(+). It carries out the reaction (6S)-5,6,7,8-tetrahydrofolate + formate + ATP = (6R)-10-formyltetrahydrofolate + ADP + phosphate. The protein operates within one-carbon metabolism; tetrahydrofolate interconversion. The sequence is that of C-1-tetrahydrofolate synthase, cytoplasmic from Spodoptera frugiperda (Fall armyworm).